Here is a 469-residue protein sequence, read N- to C-terminus: Putative dipeptidase MW1694 (469 aa).

His-84 provides a ligand contact to Zn(2+). Residue Asp-86 is part of the active site. Asp-115 is a binding site for Zn(2+). Glu-149 acts as the Proton acceptor in catalysis. Zn(2+) is bound by residues Glu-150, Asp-173, and His-440.

Belongs to the peptidase M20A family. The cofactor is Zn(2+).

The protein is Putative dipeptidase MW1694 of Staphylococcus aureus (strain MW2).